A 303-amino-acid polypeptide reads, in one-letter code: MPTTAAFLRALYILTTLRGIGTSHEVRNIKHGSESSASRARFLLHTLVIIAAKYLVLDMMTFQPPSPEDTDRMFGEGKEYLLFRPDGLPPPKMQDILTNLGVTLLGWGPIGSWFIEVHYRILSVASVGLGISQPHQWPPLFGSITEAHTLRRFWANFWHQLFRWPMQGLSSFLCRDVLRLPRPSLAERYLKITLVFAISSCLHLAIDGRAGIMLPRSGALRCFLLQPVGIILEDGAQALYRRLRGDAPLSKWTRAVGYIWTWAFLSLVAPMYNFPLFRYQDPARNGVPVPVLRPAMEYFRVKG.

Positions 1–23 (MPTTAAFLRALYILTTLRGIGTS) are cleaved as a signal peptide. Helical transmembrane passes span 42-62 (FLLH…MMTF), 194-214 (LVFA…GIML), and 257-277 (GYIW…FPLF).

It belongs to the wax synthase family.

It localises to the membrane. It functions in the pathway mycotoxin biosynthesis. Acetyltransferase; part of the gene cluster that mediates the biosynthesis of acetylaranotin, a member of the epipolythiodioxopiperazine (ETP) class of toxins characterized by a disulfide-bridged cyclic dipeptide. The first step of acetylaranotin biosynthesis is performed by the NRPS ataP which produces diketopiperazine cyclo-L-Phe-L-Phe via the condensation of 2 phenylalanines (L-Phe). The ataC domain of ataTC then catalyzes the formation of bishydroxylation of cyclo-L-Phe-L-Phe. The glutathione S-transferase domain ataG in ataIMG further catalyzes the conjugation of two glutathiones to the bishydroxylated intermediate. Next, the dipeptidase ataJ removes the Glu residues. The following step is performed by the carbon sulfur lyase domain ataI of ataIMG which may convert the bis-cysteinyl adduct to yield an epidithiol intermediate. The ataT domain from ataTC then catalyzes the oxidation of the free dithiols, followed by a cyclization step catalyzed by the cytochrome P450 ataF. AtaF probably acts as an epoxidase to promote a dual epoxidation formation at C8 and C9 along with C8' and C9', followed by the spontaneous nucleophilic attack of the amide nitrogens N10 and N10' to yield an intermediate with the pyrrolidine partial structure. The final steps of acetylaranotin biosynthesis involve the acetylation and ring rearrangement of an epitetrathiodiketopiperazine intermediate to produce acetylaranotin. AtaH probably catalyzes the acetylation of epitetrathiodiketopiperazine to produce a diacetate and ataY is responsible for the formation of the dihydrooxepin moiety that converts the diacetate intermediate to acetylaranotin via acetylapoaranotin. Both enzymes could function independently in the absence of the other. The acetylaranotin bis-thiomethyltransferase ataS located outside of acetylaranotin gene cluster is the main thiomethyltransferase responsible for converting acetylaranotin and its related intermediates to their methylated forms. In Aspergillus terreus (strain NIH 2624 / FGSC A1156), this protein is Acetyltransferase ataH.